The chain runs to 348 residues: Dihydroorotase (348 aa).

Zn(2+)-binding residues include histidine 17 and histidine 19. Substrate contacts are provided by residues 19–21 (HLR) and asparagine 45. Zn(2+)-binding residues include lysine 103, histidine 140, and histidine 178. Lysine 103 is modified (N6-carboxylysine). Histidine 140 serves as a coordination point for substrate. Leucine 223 is a substrate binding site. A Zn(2+)-binding site is contributed by aspartate 251. Aspartate 251 is an active-site residue. Substrate contacts are provided by histidine 255 and alanine 267.

Belongs to the metallo-dependent hydrolases superfamily. DHOase family. Class II DHOase subfamily. Homodimer. Requires Zn(2+) as cofactor.

It catalyses the reaction (S)-dihydroorotate + H2O = N-carbamoyl-L-aspartate + H(+). It functions in the pathway pyrimidine metabolism; UMP biosynthesis via de novo pathway; (S)-dihydroorotate from bicarbonate: step 3/3. Catalyzes the reversible cyclization of carbamoyl aspartate to dihydroorotate. The protein is Dihydroorotase of Shigella flexneri serotype 5b (strain 8401).